Reading from the N-terminus, the 220-residue chain is Phosphopantothenoylcysteine decarboxylase (220 aa).

FMN contacts are provided by residues glycine 29–valine 31 and threonine 54–alanine 56. Histidine 91 acts as the Proton donor in catalysis. FMN-binding positions include serine 107–threonine 110 and alanine 141. N-[(R)-4-phosphopantothenoyl]-L-cysteine is bound by residues asparagine 143, arginine 173, and alanine 175. The active-site Proton donor is the cysteine 176. Methionine 184 lines the N-[(R)-4-phosphopantothenoyl]-L-cysteine pocket.

The protein belongs to the HFCD (homooligomeric flavin containing Cys decarboxylase) superfamily. In terms of assembly, forms homotrimers. Interacts with HIP1. Interacts with HD1 in the dark. Requires FMN as cofactor. As to expression, expressed in root meristem, shoot apical meristem (SAM), intercalary meristem, floral meristem, embryo and tip of the coleoptile before true leaf emergence.

It is found in the nucleus. It carries out the reaction N-[(R)-4-phosphopantothenoyl]-L-cysteine + H(+) = (R)-4'-phosphopantetheine + CO2. Its pathway is cofactor biosynthesis; coenzyme A biosynthesis; CoA from (R)-pantothenate: step 3/5. Functionally, catalyzes the decarboxylation of 4'-phosphopantothenoylcysteine to 4'-phosphopantetheine, a key step in coenzyme A biosynthesis. Involved in salt and osmotic tolerance, and light-regulated plant growth. Trimerization of HAL3 recruits and activates the E3 ubiquitin-protein ligase HIP1, which leads to the degradation of cell cycle suppressors, resulting in enhancement of cell division and plant growth. HAL3 function in cell division seems to be independent from its PPC decarboxylase activity. Acts as a positive regulator of flowering by binding to HD1 in the dark. The chain is Phosphopantothenoylcysteine decarboxylase from Oryza sativa subsp. japonica (Rice).